Consider the following 710-residue polypeptide: Prolyl endopeptidase (710 aa).

The residue at position 1 (M1) is an N-acetylmethionine. Residue K157 is modified to N6-acetyllysine. Residues S554, D641, and H680 each act as charge relay system in the active site.

It belongs to the peptidase S9A family. In terms of tissue distribution, expressed in all tissues tested: uterus, kidney, heart, lung, small intestine, smooth muscle, liver, spleen, thymus, adrenal, pituitary and whole brain.

The protein localises to the cytoplasm. The enzyme catalyses Hydrolysis of Pro-|-Xaa &gt;&gt; Ala-|-Xaa in oligopeptides.. Inhibited by DFP, Z-Pro-prolinal and poststatin, but not by PMSF, SBTI, EDTA, leupeptin, E-64 and pepstatin. Cleaves peptide bonds on the C-terminal side of prolyl residues within peptides that are up to approximately 30 amino acids long. Has high activity on the succinyl- (suc-) peptide-4-methylcoumaryl-7-amide (MCA) substrates suc-Gly-Pro-Leu-Gly-Pro-MCA, suc-Gly-Pro-MCA and suc-Ala-Ala-Ala-MCA. The polypeptide is Prolyl endopeptidase (Rattus norvegicus (Rat)).